Consider the following 88-residue polypeptide: Apolipoprotein C-I (88 aa).

The first 26 residues, Met1 to Ala26, serve as a signal peptide directing secretion.

The protein belongs to the apolipoprotein C1 family.

The protein resides in the secreted. Inhibitor of lipoprotein binding to the low density lipoprotein (LDL) receptor, LDL receptor-related protein, and very low density lipoprotein (VLDL) receptor. Associates with high density lipoproteins (HDL) and the triacylglycerol-rich lipoproteins in the plasma and makes up about 10% of the protein of the VLDL and 2% of that of HDL. Appears to interfere directly with fatty acid uptake and is also the major plasma inhibitor of cholesteryl ester transfer protein (CETP). Binds free fatty acids and reduces their intracellular esterification. Modulates the interaction of APOE with beta-migrating VLDL and inhibits binding of beta-VLDL to the LDL receptor-related protein. The protein is Apolipoprotein C-I (APOC1) of Phoca vitulina (Harbor seal).